The following is a 555-amino-acid chain: Spermine oxidase (555 aa).

Residues Ala-35, Glu-55, Arg-63, 79 to 80 (TW), and Val-261 contribute to the FAD site. The tract at residues 271-307 (AHPRGPEIEPRGEGDHNHDTGEGGQSGENPQQGRWDE) is disordered. The segment covering 274–291 (RGPEIEPRGEGDHNHDTG) has biased composition (basic and acidic residues). FAD is bound by residues Glu-519 and 528–529 (TT).

The protein belongs to the flavin monoamine oxidase family. FAD serves as cofactor. In terms of tissue distribution, widely expressed. Isoform 1 and isoform 2 are expressed at higher level in brain and skeletal muscle. Isoform 7 is found in brain and spleen, isoform 10 is widely expressed but found at lower level in heart, kidney, liver and lung.

The protein localises to the cytoplasm. It localises to the nucleus. The enzyme catalyses spermine + O2 + H2O = 3-aminopropanal + spermidine + H2O2. The protein operates within amine and polyamine degradation; spermine degradation. Functionally, flavoenzyme which catalyzes the oxidation of spermine to spermidine. Can also use N(1)-acetylspermine and spermidine as substrates, with different affinity depending on the isoform (isozyme) and on the experimental conditions. Plays an important role in the regulation of polyamine intracellular concentration and has the potential to act as a determinant of cellular sensitivity to the antitumor polyamine analogs. May contribute to beta-alanine production via aldehyde dehydrogenase conversion of 3-amino-propanal. This Mus musculus (Mouse) protein is Spermine oxidase (Smox).